Consider the following 720-residue polypeptide: Aminopeptidase RNPEPL1 (720 aa).

321–325 (VAMEN) serves as a coordination point for substrate. H348 is a binding site for Zn(2+). E349 acts as the Proton acceptor in catalysis. 2 residues coordinate Zn(2+): H352 and E371. Positions 671-708 (GLGPSAEPSTEPSTDLGGAEADTNPDSPALLLGDEAPS) are disordered.

This sequence belongs to the peptidase M1 family. Zn(2+) is required as a cofactor.

The enzyme catalyses Release of N-terminal amino acids, preferentially methionine, from peptides and arylamides.. Broad specificity aminopeptidase which preferentially hydrolyzes an N-terminal methionine, citrulline or glutamine. This is Aminopeptidase RNPEPL1 from Mus musculus (Mouse).